A 2212-amino-acid polypeptide reads, in one-letter code: RNA-directed RNA polymerase L (2212 aa).

Residues 30–288 (KDALLSQVHP…SHEENDSLDC (259 aa)) are endonuclease. Positions 55, 93, and 106 each coordinate Mn(2+). K119 is a catalytic residue. The disordered stretch occupies residues 922–942 (MKSSDAREERLQDPKRNEKNA). Residues 923–942 (KSSDAREERLQDPKRNEKNA) show a composition bias toward basic and acidic residues. A RdRp catalytic domain is found at 1175-1371 (CDMKMAVNNG…YLSSKLNKFV (197 aa)). D1333 contacts Mg(2+).

The protein belongs to the Bunyavirales RNA polymerase family. As to quaternary structure, homomultimer; the oligomeric structure is essential for the polymerase activity. Interacts with nucleoprotein N. Interacts with protein Z; this interaction inhibits viral transcription and replication, Z partially blocks the product exit tunnel for the releasing nascent RNA product. Mn(2+) serves as cofactor. The cofactor is Mg(2+).

It is found in the virion. It localises to the host cytoplasm. The catalysed reaction is RNA(n) + a ribonucleoside 5'-triphosphate = RNA(n+1) + diphosphate. RNA-dependent RNA polymerase, which is responsible for the replication and transcription of the viral RNA genome using antigenomic RNA as an intermediate. During transcription, synthesizes subgenomic RNAs and assures their capping by a cap-snatching mechanism, which involves the endonuclease activity cleaving the host capped pre-mRNAs. These short capped RNAs are then used as primers for viral transcription. The 3'-end of subgenomic mRNAs molecules are heterogeneous and not polyadenylated. The replicase function is to direct synthesis of antigenomic and genomic RNA which are encapsidated and non capped. As a consequence of the use of the same enzyme for both transcription and replication, these mechanisms need to be well coordinated. These processes may be regulated by proteins N and Z in a dose-dependent manner. Z protein inhibits the viral polymerase L und thus the viral transcription and RNA synthesis. The polypeptide is RNA-directed RNA polymerase L (Sabia mammarenavirus (isolate Human/Brasil/SPH114202/1990) (SABV)).